Reading from the N-terminus, the 231-residue chain is uncharacterized protein (231 aa).

Residues 43 to 76 (YKVKVDLDNNYFGLCTCQYKYNCKHAYALIEAYE) form an SWIM-type zinc finger.

This is an uncharacterized protein from Methanocaldococcus jannaschii (strain ATCC 43067 / DSM 2661 / JAL-1 / JCM 10045 / NBRC 100440) (Methanococcus jannaschii).